A 914-amino-acid polypeptide reads, in one-letter code: Isoleucine--tRNA ligase (914 aa).

A 'HIGH' region motif is present at residues 64-74; it reads PYANGNFHLGH. Position 557 (Glu557) interacts with L-isoleucyl-5'-AMP. The short motif at 598-602 is the 'KMSKS' region element; sequence PMSKS. Lys601 contributes to the ATP binding site. Cys889, Cys892, Cys906, and Cys909 together coordinate Zn(2+).

It belongs to the class-I aminoacyl-tRNA synthetase family. IleS type 1 subfamily. In terms of assembly, monomer. Requires Zn(2+) as cofactor.

Its subcellular location is the cytoplasm. The catalysed reaction is tRNA(Ile) + L-isoleucine + ATP = L-isoleucyl-tRNA(Ile) + AMP + diphosphate. Catalyzes the attachment of isoleucine to tRNA(Ile). As IleRS can inadvertently accommodate and process structurally similar amino acids such as valine, to avoid such errors it has two additional distinct tRNA(Ile)-dependent editing activities. One activity is designated as 'pretransfer' editing and involves the hydrolysis of activated Val-AMP. The other activity is designated 'posttransfer' editing and involves deacylation of mischarged Val-tRNA(Ile). The sequence is that of Isoleucine--tRNA ligase from Leptospira interrogans serogroup Icterohaemorrhagiae serovar copenhageni (strain Fiocruz L1-130).